A 251-amino-acid polypeptide reads, in one-letter code: 14-3-3-like protein (251 aa).

This sequence belongs to the 14-3-3 family. Most abundant in roots and flowers.

The polypeptide is 14-3-3-like protein (Nicotiana tabacum (Common tobacco)).